Reading from the N-terminus, the 581-residue chain is Multicopper oxidase LPR1 (581 aa).

An N-terminal signal peptide occupies residues 1-28; that stretch reads MESLLCRRRIKRVMVLIIALTWLRSTCG. Residues H148, H150, H196, and H198 each coordinate Cu cation. N-linked (GlcNAc...) asparagine glycosylation is found at N254, N298, N386, and N458. One can recognise a Plastocyanin-like domain in the interval 283 to 352; that stretch reads PRLNVRRRKY…DVVVDFYKSP (70 aa). 3 residues coordinate Cu cation: H464, H467, and H469. N546 is a glycosylation site (N-linked (GlcNAc...) asparagine). Residues H562, C563, H564, H568, and M573 each coordinate Cu cation.

It belongs to the multicopper oxidase family. Cu cation is required as a cofactor.

The protein resides in the endoplasmic reticulum membrane. Multicopper oxidase that may be involved in copper homeostasis and oxidative stress response, and that is necessary for root growth inhibition by low phosphate conditions. Functions together with LPR2 and PDR2 in a common pathway that adjusts root meristem activity to phosphate availability. Oxidizes the substrate 2,2'-azinobis-(3-ethylbenzthiazoline-6-sulphonate) in vitro. This Arabidopsis thaliana (Mouse-ear cress) protein is Multicopper oxidase LPR1 (LPR1).